The following is a 407-amino-acid chain: Extracellular superoxide dismutase [Cu-Zn] 3 (407 aa).

A signal peptide spans 1-19 (MRLLSVLVFLISVISIAKA). The Extracellular portion of the chain corresponds to 20–386 (DYQYAFCKFN…SESYNDNEPG (367 aa)). 3 N-linked (GlcNAc...) asparagine glycosylation sites follow: N51, N205, and N224. Cu cation is bound by residues H245 and H247. Residue N256 is glycosylated (N-linked (GlcNAc...) asparagine). Cu cation is bound at residue H263. Zn(2+)-binding residues include H263, H271, H280, and D283. Position 320 (H320) interacts with Cu cation. N-linked (GlcNAc...) asparagine glycosylation is found at N321 and N364. A helical membrane pass occupies residues 387–406 (SSSTVIPFFALIIFSIIFAL). A topological domain (cytoplasmic) is located at residue L407.

This sequence belongs to the Cu-Zn superoxide dismutase family. It depends on Cu cation as a cofactor. Zn(2+) is required as a cofactor.

The protein localises to the cell membrane. The enzyme catalyses 2 superoxide + 2 H(+) = H2O2 + O2. Its function is as follows. Protect the extracellular space from toxic effect of reactive oxygen intermediates by converting superoxyde radicals into hydrogen peroxyde and oxygen. This is Extracellular superoxide dismutase [Cu-Zn] 3 (sodC) from Dictyostelium discoideum (Social amoeba).